A 1633-amino-acid chain; its full sequence is Laminin-like protein lam-2 (1633 aa).

Positions 1–19 are cleaved as a signal peptide; the sequence is MTSILWLFSLAVLWHMGQP. Residues 47-286 enclose the Laminin N-terminal domain; that stretch reads QPQRCVPDFV…AISDFAVGGR (240 aa). N-linked (GlcNAc...) asparagine glycosylation is found at Asn116 and Asn136. Cystine bridges form between Cys287–Cys296, Cys289–Cys310, Cys312–Cys321, Cys324–Cys344, Cys347–Cys356, Cys349–Cys372, Cys375–Cys384, Cys387–Cys400, Cys403–Cys415, Cys405–Cys421, Cys423–Cys432, Cys435–Cys447, Cys450–Cys464, Cys452–Cys471, Cys473–Cys482, and Cys485–Cys500. Laminin EGF-like domains follow at residues 287-346, 347-402, 403-449, and 450-502; these read CKCN…ECIA, CNCS…YCVA, CGCN…GCKN, and CGCE…GCTP. A glycan (N-linked (GlcNAc...) asparagine) is linked at Asn348. The region spanning 503-512 is the Laminin EGF-like 5; first part domain; sequence CFCFGHSSIC. 3 N-linked (GlcNAc...) asparagine glycosylation sites follow: Asn522, Asn658, and Asn740. Residues 529–701 form the Laminin IV type A domain; the sequence is QDKQKWAGQN…NPKQATWIEH (173 aa). The Laminin EGF-like 5; second part domain occupies 702 to 747; that stretch reads CECLPGFVGQFCESCESGFRRETKFGGPFNHCIKCDCHNHSNSCEA. 23 disulfide bridges follow: Cys736-Cys745, Cys738-Cys752, Cys754-Cys763, Cys766-Cys782, Cys785-Cys803, Cys806-Cys815, Cys818-Cys832, Cys835-Cys849, Cys837-Cys856, Cys859-Cys868, Cys871-Cys887, Cys890-Cys909, Cys892-Cys916, Cys918-Cys927, Cys930-Cys943, Cys946-Cys958, Cys948-Cys965, Cys967-Cys976, Cys979-Cys991, Cys994-Cys1006, Cys996-Cys1013, Cys1015-Cys1024, and Cys1027-Cys1038. In terms of domain architecture, Laminin EGF-like 6; truncated spans 752–784; sequence CICEHNTAGDTCERCARGYYGDALQGTEEDCQK. Laminin EGF-like domains lie at 785–834, 835–889, 890–945, 946–993, and 994–1040; these read CPCP…ECVE, CACS…NCQS, CGCF…GCQE, CNCD…GCQP, and CDCE…GCLP. N-linked (GlcNAc...) asparagine glycosylation is present at Asn936. N-linked (GlcNAc...) asparagine glycosylation is found at Asn1077, Asn1183, Asn1226, Asn1259, Asn1336, Asn1452, and Asn1528.

Its function is as follows. During the formation of neuromuscular junctions at the larval stage, negatively regulates membrane protrusion from body wall muscles, probably downstream of the integrin complex formed by pat-2 and pat-3. The protein is Laminin-like protein lam-2 (lam-2) of Caenorhabditis elegans.